The primary structure comprises 318 residues: Ribose-phosphate pyrophosphokinase 1 (318 aa).

Residues 43-45 (DGE) and 102-103 (RQ) each bind ATP. Histidine 136 and aspartate 176 together coordinate Mg(2+). Lysine 199 is an active-site residue. D-ribose 5-phosphate is bound by residues arginine 201, aspartate 225, and 229 to 233 (DTAGT).

It belongs to the ribose-phosphate pyrophosphokinase family. Class I subfamily. In terms of assembly, homohexamer. Requires Mg(2+) as cofactor.

Its subcellular location is the cytoplasm. It catalyses the reaction D-ribose 5-phosphate + ATP = 5-phospho-alpha-D-ribose 1-diphosphate + AMP + H(+). It functions in the pathway metabolic intermediate biosynthesis; 5-phospho-alpha-D-ribose 1-diphosphate biosynthesis; 5-phospho-alpha-D-ribose 1-diphosphate from D-ribose 5-phosphate (route I): step 1/1. Its function is as follows. Involved in the biosynthesis of the central metabolite phospho-alpha-D-ribosyl-1-pyrophosphate (PRPP) via the transfer of pyrophosphoryl group from ATP to 1-hydroxyl of ribose-5-phosphate (Rib-5-P). This is Ribose-phosphate pyrophosphokinase 1 from Listeria monocytogenes serotype 4b (strain F2365).